A 162-amino-acid polypeptide reads, in one-letter code: Terminase, small subunit (162 aa).

A helix-turn-helix (HTH) region spans residues 7 to 27 (NRFWEARSSHGRNPKFESPEA). The segment at 132–162 (QVEDVTPDKGDRDKRRSRIKELFNRGTGRDS) is disordered. Basic and acidic residues predominate over residues 137 to 162 (TPDKGDRDKRRSRIKELFNRGTGRDS). Residues 140 to 162 (KGDRDKRRSRIKELFNRGTGRDS) form an interaction with the terminase large subunit gp2 region. A DNA-binding region spans residues 143 to 152 (RDKRRSRIKE).

It belongs to the P22likvirus small terminase family. As to quaternary structure, homononamer; forms a ring-like structure through which genomic DNA is translocated into the capsid. Interacts with the terminase small subunit; the active complex is composed of dimer of terminase large subunits and a nonamer ring of terminase small subunits.

Its function is as follows. The terminase small subunit binds to the packaging initiation site and regulates the ATPase activity of the terminase large subunit. The terminase lies at a unique vertex of the procapsid and is composed of two subunits, a small terminase subunit involved in viral DNA recognition (packaging 'pac' sequence), and a large terminase subunit possessing endonucleolytic and ATPase activities. Both terminase subunits heterooligomerize and are docked on the portal protein to form the packaging machine. The terminase large subunit exhibits endonuclease activity and cleaves the viral genome concatemer once the capsid is full (headful packaging). Once the capsid is packaged with the DNA, the terminase complex is substituted by neck proteins. This is Terminase, small subunit (3) from Salmonella typhimurium (Bacteriophage P22).